The sequence spans 358 residues: Trace amine-associated receptor 7d (358 aa).

The Extracellular portion of the chain corresponds to 1–47 (MATGDDSFPWDQDSILSRDLFSATSTELCYENLNRSCVRSPYSPGPR). An N-linked (GlcNAc...) asparagine glycan is attached at Asn-34. Cystine bridges form between Cys-37–Cys-201 and Cys-120–Cys-205. The helical transmembrane segment at 48–68 (LILYAVFGFGAVLAVCGNLLV) threads the bilayer. The Cytoplasmic segment spans residues 69–83 (MTSILHFRQLHSPAN). A helical membrane pass occupies residues 84–104 (FLVASLACADFLVGVMVMPFS). At 105–121 (MVRSVEGCWYFGESYCK) the chain is on the extracellular side. A helical membrane pass occupies residues 122–143 (FHSCFEGSFCYSSLFHLCFISV). Residues 144-166 (DRYIAVSDPLTYPTRFTASVSGK) lie on the Cytoplasmic side of the membrane. A helical membrane pass occupies residues 167 to 187 (CITFSWLLSIIYSFSLLYTGA). Topologically, residues 188-212 (NDAGLEDLVSALTCVGGCQIAVNQT) are extracellular. Asn-210 carries N-linked (GlcNAc...) asparagine glycosylation. The helical transmembrane segment at 213–233 (WVFINFLLFLIPTLVMITVYS) threads the bilayer. At 234–274 (KIFLIAKQQAQNIEKMSKQTARASESYKDRVTKRERKAAKT) the chain is on the cytoplasmic side. The chain crosses the membrane as a helical span at residues 275-295 (LGIAVAAFLLSWLPYFIDSII). Over 296-309 (DAFLGFITPTYVYE) the chain is Extracellular. Residues 310-333 (ILVWIVYYNSAMNPLIYAFFYSWF) form a helical membrane-spanning segment. Over 334–358 (RKAIKLIVSGKILRENSSTTNLFPE) the chain is Cytoplasmic.

It belongs to the G-protein coupled receptor 1 family. In terms of tissue distribution, specifically expressed in neurons of the olfactory epithelium.

Its subcellular location is the cell membrane. Its function is as follows. Olfactory receptor specific for trace amines, such as beta-phenylethylamine (beta-PEA). Trace amine compounds are enriched in animal body fluids and act on trace amine-associated receptors (TAARs) to elicit both intraspecific and interspecific innate behaviors. Ligand-binding causes a conformation change that triggers signaling via G(s)-class of G alpha proteins (GNAL or GNAS). This is Trace amine-associated receptor 7d from Mus musculus (Mouse).